Consider the following 184-residue polypeptide: Photosystem I assembly protein Ycf4 (184 aa).

A run of 2 helical transmembrane segments spans residues 22–42 (FCWACILFLGSLGFLLVGTSS) and 57–77 (ILFFPQGIVMSFYGIAGLFIS).

The protein belongs to the Ycf4 family.

The protein resides in the plastid. Its subcellular location is the chloroplast thylakoid membrane. In terms of biological role, seems to be required for the assembly of the photosystem I complex. In Chloranthus spicatus (Chulantree), this protein is Photosystem I assembly protein Ycf4.